Consider the following 556-residue polypeptide: Potassium-transporting ATPase potassium-binding subunit (556 aa).

The next 12 membrane-spanning stretches (helical) occupy residues 3 to 23 (AHGV…TPIL), 57 to 77 (AAYA…LYAL), 129 to 149 (GLTV…VALM), 172 to 192 (LGLL…QGVP), 247 to 267 (LVNL…TNTF), 278 to 298 (WALL…AWWA), 319 to 339 (LGVA…CGAV), 346 to 366 (LLPL…VVVG), 371 to 391 (GLYG…LMVG), 408 to 428 (LAVI…GLAI), 486 to 506 (FVVM…MAVP), and 516 to 536 (GWLF…LTYF).

This sequence belongs to the KdpA family. The system is composed of three essential subunits: KdpA, KdpB and KdpC.

Its subcellular location is the cell inner membrane. Part of the high-affinity ATP-driven potassium transport (or Kdp) system, which catalyzes the hydrolysis of ATP coupled with the electrogenic transport of potassium into the cytoplasm. This subunit binds the periplasmic potassium ions and delivers the ions to the membrane domain of KdpB through an intramembrane tunnel. The polypeptide is Potassium-transporting ATPase potassium-binding subunit (Paramagnetospirillum magneticum (strain ATCC 700264 / AMB-1) (Magnetospirillum magneticum)).